We begin with the raw amino-acid sequence, 917 residues long: Protein translocase subunit SecA (917 aa).

ATP-binding positions include Gln87, 105–109, and Asp513; that span reads GEGKT. A disordered region spans residues 834 to 917; that stretch reads EEQMNEMEKR…YKSCHGKLTG (84 aa). Basic and acidic residues predominate over residues 839-852; sequence EMEKRRQEEAERQR. The span at 862–876 shows a compositional bias: low complexity; that stretch reads APSQLAAPATPATPE. The Zn(2+) site is built by Cys900, Cys902, Cys911, and His912.

Belongs to the SecA family. As to quaternary structure, monomer and homodimer. Part of the essential Sec protein translocation apparatus which comprises SecA, SecYEG and auxiliary proteins SecDF-YajC and YidC. The cofactor is Zn(2+).

It is found in the cell inner membrane. The protein resides in the cytoplasm. The enzyme catalyses ATP + H2O + cellular proteinSide 1 = ADP + phosphate + cellular proteinSide 2.. Its function is as follows. Part of the Sec protein translocase complex. Interacts with the SecYEG preprotein conducting channel. Has a central role in coupling the hydrolysis of ATP to the transfer of proteins into and across the cell membrane, serving both as a receptor for the preprotein-SecB complex and as an ATP-driven molecular motor driving the stepwise translocation of polypeptide chains across the membrane. The sequence is that of Protein translocase subunit SecA from Saccharophagus degradans (strain 2-40 / ATCC 43961 / DSM 17024).